Reading from the N-terminus, the 477-residue chain is Lactate utilization protein B (477 aa).

4Fe-4S ferredoxin-type domains follow at residues 304–334 (GTEF…GHSY) and 353–382 (YDDY…LHEL). [4Fe-4S] cluster-binding residues include Cys-313, Cys-316, Cys-319, Cys-323, Cys-366, Cys-369, and Cys-373. Positions 433-477 (KEDGKITKGPGPLKQWTQIRDFPAPNKSRFRDWFEDRRKEKGEDK) are disordered. The segment covering 461–477 (RFRDWFEDRRKEKGEDK) has biased composition (basic and acidic residues).

The protein belongs to the LutB/YkgF family.

Its function is as follows. Is involved in L-lactate degradation and allows cells to grow with lactate as the sole carbon source. Has probably a role as an electron transporter during oxidation of L-lactate. The sequence is that of Lactate utilization protein B from Bacillus licheniformis (strain ATCC 14580 / DSM 13 / JCM 2505 / CCUG 7422 / NBRC 12200 / NCIMB 9375 / NCTC 10341 / NRRL NRS-1264 / Gibson 46).